Reading from the N-terminus, the 321-residue chain is Malate dehydrogenase (321 aa).

NAD(+)-binding positions include 10 to 15 (GAGQIG) and Asp34. Arg83 and Arg89 together coordinate substrate. NAD(+)-binding positions include Asn96 and 119–121 (VTN). Residues Asn121 and Arg152 each coordinate substrate. His176 acts as the Proton acceptor in catalysis.

The protein belongs to the LDH/MDH superfamily. MDH type 3 family.

It carries out the reaction (S)-malate + NAD(+) = oxaloacetate + NADH + H(+). In terms of biological role, catalyzes the reversible oxidation of malate to oxaloacetate. This chain is Malate dehydrogenase, found in Azorhizobium caulinodans (strain ATCC 43989 / DSM 5975 / JCM 20966 / LMG 6465 / NBRC 14845 / NCIMB 13405 / ORS 571).